The sequence spans 345 residues: Baculoviral IAP repeat-containing protein 7-B (345 aa).

BIR repeat units follow at residues 46 to 112 (RQRS…PFLQ) and 154 to 219 (RLGS…DFLL). C188, C191, H208, and C215 together coordinate Zn(2+). S237 is subject to Phosphoserine. S241 bears the Phosphoserine; by MAPK1 mark. The residue at position 253 (S253) is a Phosphoserine. At S257 the chain carries Phosphoserine; by MAPK1. Residues 258–286 (TESVSVPRAPTPGERSEPPKVSGPPLSTE) are disordered. The RING-type zinc finger occupies 298–333 (CKVCMDKDVSMLFVPCGHLVVCTECAPNLRHCPICR).

The protein belongs to the IAP family. Auto-ubiquitinated, and degraded in a 2-step mechanism; a caspase-independent first step and a caspase-dependent second step. Post-translationally, phosphorylated via MAPK-dependent and CDK-dependent pathways during oocyte maturation. Phosphorylation does not appear to affect caspase inhibition or autoubiquitination activity.

Its subcellular location is the cytoplasm. It carries out the reaction S-ubiquitinyl-[E2 ubiquitin-conjugating enzyme]-L-cysteine + [acceptor protein]-L-lysine = [E2 ubiquitin-conjugating enzyme]-L-cysteine + N(6)-ubiquitinyl-[acceptor protein]-L-lysine.. Functionally, weak apoptotic suppressor. Has E3 ubiquitin-protein ligase activity. Weak inhibitor of caspase activity. This is Baculoviral IAP repeat-containing protein 7-B (birc7-b) from Xenopus laevis (African clawed frog).